The chain runs to 341 residues: HTH-type transcriptional repressor PurR (341 aa).

An HTH lacI-type domain is found at 2–56 (ATIKDVAKRANVSTTTVSHVINKTRFVAEETRNAVWAAIKELHYSPSAVARSLKV). A DNA-binding region (H-T-H motif) is located at residues 4–23 (IKDVAKRANVSTTTVSHVIN). The DNA-binding element occupies 48-56 (SAVARSLKV). 5 residues coordinate hypoxanthine: Tyr-73, Arg-190, Thr-192, Phe-221, and Asp-275.

Homodimer.

It functions in the pathway purine metabolism; purine nucleotide biosynthesis [regulation]. In terms of biological role, is the main repressor of the genes involved in the de novo synthesis of purine nucleotides, regulating purB, purC, purEK, purF, purHD, purL, purMN and guaBA expression. PurR is allosterically activated to bind its cognate DNA by binding the purine corepressors, hypoxanthine or guanine, thereby effecting transcription repression. The chain is HTH-type transcriptional repressor PurR from Klebsiella pneumoniae (strain 342).